We begin with the raw amino-acid sequence, 391 residues long: Phosphoglycerate kinase (391 aa).

Substrate is bound by residues 21-23 (DLN), Arg-36, 59-62 (HLGR), Arg-114, and Arg-147. ATP is bound by residues Lys-198, Glu-315, and 344–347 (GGDT).

This sequence belongs to the phosphoglycerate kinase family. As to quaternary structure, monomer.

It localises to the cytoplasm. It carries out the reaction (2R)-3-phosphoglycerate + ATP = (2R)-3-phospho-glyceroyl phosphate + ADP. It participates in carbohydrate degradation; glycolysis; pyruvate from D-glyceraldehyde 3-phosphate: step 2/5. The sequence is that of Phosphoglycerate kinase from Actinobacillus succinogenes (strain ATCC 55618 / DSM 22257 / CCUG 43843 / 130Z).